We begin with the raw amino-acid sequence, 490 residues long: Ribulose bisphosphate carboxylase large chain (490 aa).

Residues Asn127 and Thr177 each coordinate substrate. The active-site Proton acceptor is the Lys179. Lys181 contacts substrate. Lys205, Asp207, and Glu208 together coordinate Mg(2+). Position 205 is an N6-carboxylysine (Lys205). Residue His297 is the Proton acceptor of the active site. The substrate site is built by Arg298, His330, and Ser382.

This sequence belongs to the RuBisCO large chain family. Type I subfamily. As to quaternary structure, heterohexadecamer of 8 large chains and 8 small chains. Mg(2+) serves as cofactor.

The protein resides in the plastid. The protein localises to the chloroplast. It carries out the reaction 2 (2R)-3-phosphoglycerate + 2 H(+) = D-ribulose 1,5-bisphosphate + CO2 + H2O. The enzyme catalyses D-ribulose 1,5-bisphosphate + O2 = 2-phosphoglycolate + (2R)-3-phosphoglycerate + 2 H(+). Functionally, ruBisCO catalyzes two reactions: the carboxylation of D-ribulose 1,5-bisphosphate, the primary event in carbon dioxide fixation, as well as the oxidative fragmentation of the pentose substrate in the photorespiration process. Both reactions occur simultaneously and in competition at the same active site. In Detonula confervacea (Marine diatom), this protein is Ribulose bisphosphate carboxylase large chain.